A 544-amino-acid chain; its full sequence is Probable acyl-activating enzyme 8 (544 aa).

This sequence belongs to the ATP-dependent AMP-binding enzyme family. Expressed at low levels in roots, leaves, stems, flowers and developing seeds.

May act as an acid--thiol ligase that activates carboxylic acids by forming acyl-CoAs. This Arabidopsis thaliana (Mouse-ear cress) protein is Probable acyl-activating enzyme 8 (AAE8).